An 85-amino-acid polypeptide reads, in one-letter code: MSVLENWDSWKNFLGDRLNYAQDKGMSQDTITDLATEIGSYLANEVESKNEQEKVLADLWSVASKDEQHAIANMMVKLVENNSTH.

This is an uncharacterized protein from Bacillus subtilis (strain 168).